A 323-amino-acid chain; its full sequence is GDSL esterase/lipase At5g03980 (323 aa).

Positions Met-1–Ser-21 are cleaved as a signal peptide. Catalysis depends on Ser-36, which acts as the Nucleophile. N-linked (GlcNAc...) asparagine glycosylation occurs at Asn-77. Residues Asp-294 and His-297 contribute to the active site.

Belongs to the 'GDSL' lipolytic enzyme family.

The protein resides in the secreted. The chain is GDSL esterase/lipase At5g03980 from Arabidopsis thaliana (Mouse-ear cress).